The chain runs to 397 residues: Methylthioribose kinase (397 aa).

Residues asparagine 43, lysine 60, and 114–116 (EDL) each bind ATP. Residue aspartate 232 participates in substrate binding. Position 249-251 (249-251 (DPE)) interacts with ATP. Residue arginine 340 participates in substrate binding.

This sequence belongs to the methylthioribose kinase family. As to quaternary structure, homodimer.

It catalyses the reaction 5-(methylsulfanyl)-D-ribose + ATP = 5-(methylsulfanyl)-alpha-D-ribose 1-phosphate + ADP + H(+). It participates in amino-acid biosynthesis; L-methionine biosynthesis via salvage pathway; S-methyl-5-thio-alpha-D-ribose 1-phosphate from S-methyl-5'-thioadenosine (hydrolase route): step 2/2. Its function is as follows. Catalyzes the phosphorylation of methylthioribose into methylthioribose-1-phosphate. The sequence is that of Methylthioribose kinase from Bacillus pumilus (strain SAFR-032).